A 99-amino-acid polypeptide reads, in one-letter code: UPF0213 protein spr1390 (99 aa).

The region spanning 3-78 (HKAYMYVLEC…KRKKRPQKEE (76 aa)) is the GIY-YIG domain.

The protein belongs to the UPF0213 family.

The polypeptide is UPF0213 protein spr1390 (Streptococcus pneumoniae (strain ATCC BAA-255 / R6)).